The chain runs to 581 residues: Adenine deaminase (581 aa).

Belongs to the metallo-dependent hydrolases superfamily. Adenine deaminase family. Mn(2+) is required as a cofactor.

The catalysed reaction is adenine + H2O + H(+) = hypoxanthine + NH4(+). In Clostridium botulinum (strain Eklund 17B / Type B), this protein is Adenine deaminase.